A 122-amino-acid chain; its full sequence is Large ribosomal subunit protein uL14 (122 aa).

The protein belongs to the universal ribosomal protein uL14 family. Part of the 50S ribosomal subunit. Forms a cluster with proteins L3 and L19. In the 70S ribosome, L14 and L19 interact and together make contacts with the 16S rRNA in bridges B5 and B8.

Functionally, binds to 23S rRNA. Forms part of two intersubunit bridges in the 70S ribosome. In Bacillus pumilus (strain SAFR-032), this protein is Large ribosomal subunit protein uL14.